The following is an 822-amino-acid chain: LPS-assembly protein LptD (822 aa).

An N-terminal signal peptide occupies residues methionine 1–alanine 37. The segment at glutamine 38–valine 97 is disordered.

The protein belongs to the LptD family. In terms of assembly, component of the lipopolysaccharide transport and assembly complex. Interacts with LptE and LptA.

Its subcellular location is the cell outer membrane. Functionally, together with LptE, is involved in the assembly of lipopolysaccharide (LPS) at the surface of the outer membrane. The chain is LPS-assembly protein LptD from Polaromonas sp. (strain JS666 / ATCC BAA-500).